Reading from the N-terminus, the 89-residue chain is Small ribosomal subunit protein uS15 (89 aa).

It belongs to the universal ribosomal protein uS15 family. In terms of assembly, part of the 30S ribosomal subunit. Forms a bridge to the 50S subunit in the 70S ribosome, contacting the 23S rRNA.

In terms of biological role, one of the primary rRNA binding proteins, it binds directly to 16S rRNA where it helps nucleate assembly of the platform of the 30S subunit by binding and bridging several RNA helices of the 16S rRNA. Its function is as follows. Forms an intersubunit bridge (bridge B4) with the 23S rRNA of the 50S subunit in the ribosome. This Chlorobium phaeobacteroides (strain BS1) protein is Small ribosomal subunit protein uS15.